Here is a 598-residue protein sequence, read N- to C-terminus: Torsin-1A-interacting protein 1 (598 aa).

Residues 1 to 351 (MAGEGRRAEA…PQNASFVKRN (351 aa)) lie on the Nuclear side of the membrane. Disordered regions lie at residues 19–254 (VTPR…RSSS) and 267–314 (QNFT…IYGS). The residue at position 60 (serine 60) is a Phosphoserine. Composition is skewed to basic and acidic residues over residues 73–101 (LVDKERSPVGKRTRLEEFRSDSAKEEVRE) and 115–124 (RPQEAEEMKT). Phosphoserine is present on residues serine 135, serine 143, serine 154, serine 156, serine 157, and serine 187. Residues 205-214 (EATSVQQKVN) are compositionally biased toward polar residues. At serine 216 the chain carries Phosphoserine. Position 221 is a phosphothreonine (threonine 221). A phosphoserine mark is found at serine 227, serine 230, and serine 242. The span at 238-250 (RSRDSDESGDKTT) shows a compositional bias: basic and acidic residues. Polar residues-rich tracts occupy residues 277 to 287 (SVLSSGYQKTP) and 300 to 313 (RMQTSSPGKSSIYG). The residue at position 320 (serine 320) is a Phosphoserine. The disordered stretch occupies residues 322-341 (LKSELGNQSPSTSSQQVTGQ). Lysine 323 participates in a covalent cross-link: Glycyl lysine isopeptide (Lys-Gly) (interchain with G-Cter in SUMO2). Residues 326-341 (LGNQSPSTSSQQVTGQ) are compositionally biased toward polar residues. The residue at position 330 (serine 330) is a Phosphoserine. Residues 352–372 (WWWLLPLIAALASGSFWFFST) form a helical membrane-spanning segment. Residues 371–598 (STPEVETTAV…ENALKRGICL (228 aa)) form an interaction with TOR1A region. At 373-598 (PEVETTAVQE…ENALKRGICL (226 aa)) the chain is on the perinuclear space side. The stretch at 374–450 (EVETTAVQEF…SEQIADAYSS (77 aa)) forms a coiled coil. The N-linked (GlcNAc...) asparagine glycan is linked to asparagine 414.

It belongs to the TOR1AIP family. In terms of assembly, interacts with ATP1B4. Interacts with TOR1A (ATP-bound). Interacts with TOR1B, TOR2A and TOR3A.

The protein resides in the nucleus inner membrane. Required for nuclear membrane integrity. Induces TOR1A and TOR1B ATPase activity and is required for their location on the nuclear membrane. Binds to A- and B-type lamins. Possible role in membrane attachment and assembly of the nuclear lamina. The protein is Torsin-1A-interacting protein 1 (TOR1AIP1) of Pongo abelii (Sumatran orangutan).